The primary structure comprises 259 residues: 3-deoxy-manno-octulosonate cytidylyltransferase (259 aa).

Belongs to the KdsB family.

The protein resides in the cytoplasm. It carries out the reaction 3-deoxy-alpha-D-manno-oct-2-ulosonate + CTP = CMP-3-deoxy-beta-D-manno-octulosonate + diphosphate. It functions in the pathway nucleotide-sugar biosynthesis; CMP-3-deoxy-D-manno-octulosonate biosynthesis; CMP-3-deoxy-D-manno-octulosonate from 3-deoxy-D-manno-octulosonate and CTP: step 1/1. It participates in bacterial outer membrane biogenesis; lipopolysaccharide biosynthesis. Functionally, activates KDO (a required 8-carbon sugar) for incorporation into bacterial lipopolysaccharide in Gram-negative bacteria. This is 3-deoxy-manno-octulosonate cytidylyltransferase from Xanthomonas euvesicatoria pv. vesicatoria (strain 85-10) (Xanthomonas campestris pv. vesicatoria).